The following is a 295-amino-acid chain: MMARDEENPAVPRVRTGKFSFTCANHLILQISEKMSRGQPLSSLRLEELKIVRLICVLLFHRGLETLLLRETMNNLGVSDHAVLSRKTPQPYWPHLYRELRQAFPGLDFEAAVFDETRAARLSQRLCHPRLSGGLLTRFVQRHTGLPVVFPEDLARNGNILFSLGTLYGHRLFRLAAFFTRHWGAEAYEPLIRIICQKMWYFYLIGTGKMRITPDAFEIQRSRHETGIFTFIMEDYRTFAGTLSRHPHRPHPQQQQHHHPGPPHPPLSHPASSCLSPEAVLAARALHMPTLANDV.

The disordered stretch occupies residues 243 to 273 (LSRHPHRPHPQQQQHHHPGPPHPPLSHPASS). A compositionally biased stretch (basic residues) spans 245–261 (RHPHRPHPQQQQHHHPG).

It belongs to the herpesviridae UL79 family.

The protein resides in the host nucleus. Plays a role in the expression of late transcripts bridging viral DNA replication and late gene expression during infection. Functions concordantly with UL87 to initiate transcription from over half of all active viral promoters in late infection, without affecting host transcription. Acts on and binds to viral early-late and late kinetic-class promoters. The polypeptide is Protein UL79 (UL79) (Human cytomegalovirus (strain AD169) (HHV-5)).